Consider the following 138-residue polypeptide: Prefoldin subunit alpha (138 aa).

Belongs to the prefoldin subunit alpha family. Heterohexamer of two alpha and four beta subunits.

It localises to the cytoplasm. In terms of biological role, molecular chaperone capable of stabilizing a range of proteins. Seems to fulfill an ATP-independent, HSP70-like function in archaeal de novo protein folding. In Methanococcoides burtonii (strain DSM 6242 / NBRC 107633 / OCM 468 / ACE-M), this protein is Prefoldin subunit alpha.